An 86-amino-acid chain; its full sequence is Large ribosomal subunit protein bL31B (86 aa).

The protein belongs to the bacterial ribosomal protein bL31 family. Type B subfamily. As to quaternary structure, part of the 50S ribosomal subunit.

This chain is Large ribosomal subunit protein bL31B, found in Vibrio vulnificus (strain YJ016).